A 217-amino-acid polypeptide reads, in one-letter code: MDTQTLNFNKVHFVTSAPDIRHLPNDGGVEIAFAGRSNAGKSSALNTLTKHKNLARTSKTPGRTQLINLFELEPGKRLVDLPGYGYAQVPLEMKLKWQKSLAEYLQRRESLKGLVILMDIRHPLKDTDMNMLEWSSHRELPVMLLLTKADKLSPGPRNNQVIKVRQAIADLGPQIQVEAFSSLNNIGVEKLAQTLSGWYLAGADEIADNDEQEQVEE.

The 175-residue stretch at 27-201 folds into the EngB-type G domain; it reads GGVEIAFAGR…AQTLSGWYLA (175 aa). GTP is bound by residues 35-42, 62-66, 80-83, 147-150, and 180-182; these read GRSNAGKS, GRTQL, DLPG, TKAD, and FSS. The Mg(2+) site is built by Ser-42 and Thr-64.

It belongs to the TRAFAC class TrmE-Era-EngA-EngB-Septin-like GTPase superfamily. EngB GTPase family. Requires Mg(2+) as cofactor.

Necessary for normal cell division and for the maintenance of normal septation. The polypeptide is Probable GTP-binding protein EngB (Aeromonas salmonicida (strain A449)).